Here is a 366-residue protein sequence, read N- to C-terminus: Galactoside alpha-(1,2)-fucosyltransferase 1 (366 aa).

The Cytoplasmic portion of the chain corresponds to 1–8 (MWPLSHRH). A helical; Signal-anchor for type II membrane protein transmembrane segment spans residues 9–25 (LCLAFLLVCVLSAISFF). Over 26–366 (LHIHQDSFRH…LSPLWTLAEP (341 aa)) the chain is Lumenal. 3 N-linked (GlcNAc...) asparagine glycosylation sites follow: Asn-66, Asn-302, and Asn-328.

The protein belongs to the glycosyltransferase 11 family.

Its subcellular location is the golgi apparatus. It localises to the golgi stack membrane. The catalysed reaction is a beta-D-galactosyl-(1-&gt;4)-N-acetyl-beta-D-glucosaminyl derivative + GDP-beta-L-fucose = an alpha-L-Fuc-(1-&gt;2)-beta-D-Gal-(1-&gt;4)-beta-D-GlcNAc derivative + GDP + H(+). It carries out the reaction a ganglioside GA1 + GDP-beta-L-fucose = a ganglioside Fuc-GA1 + GDP + H(+). It catalyses the reaction a beta-D-Gal-(1-&gt;3)-beta-D-GlcNAc-(1-&gt;3)-beta-D-Gal-(1-&gt;4)-beta-D-Glc-(1&lt;-&gt;1')-Cer(d18:1(4E)) + GDP-beta-L-fucose = alpha-L-fucosyl-(1-&gt;2)- beta-D-galactosyl-(1-&gt;3)-N-acetyl-beta-D-glucosaminyl-(1-&gt;3)-beta-D-galactosyl-(1-&gt;4)-beta-D-glucosyl-(1&lt;-&gt;1')-N-acylsphing-4-enine + GDP + H(+). The enzyme catalyses a neolactoside nLc4Cer(d18:1(4E)) + GDP-beta-L-fucose = a neolactoside IV(2)-alpha-Fuc-nLc4Cer(d18:1(4E)) + GDP + H(+). The catalysed reaction is a ganglioside GM1 + GDP-beta-L-fucose = a ganglioside Fuc-GM1 + GDP + H(+). It carries out the reaction beta-D-galactosyl-(1-&gt;3)-N-acetyl-D-galactosamine + GDP-beta-L-fucose = alpha-L-fucosyl-(1-&gt;2)-beta-D-galactosyl-(1-&gt;3)-N-acetyl-D-galactosamine + GDP + H(+). The protein operates within protein modification; protein glycosylation. Catalyzes the transfer of L-fucose, from a guanosine diphosphate-beta-L-fucose, to the terminal galactose residue of glycoconjugates through an alpha(1,2) linkage leading to H antigen synthesis that is an intermediate substrate in the synthesis of ABO blood group antigens. H antigen is essential for maturation of the glomerular layer of the main olfactory bulb, in cell migration and early cell-cell contacts during tumor associated angiogenesis. Preferentially fucosylates soluble lactose and to a lesser extent fucosylates glycolipids gangliosides GA1 and GM1a. The sequence is that of Galactoside alpha-(1,2)-fucosyltransferase 1 from Plecturocebus brunneus (Brown titi monkey).